Reading from the N-terminus, the 557-residue chain is Glucose-6-phosphate isomerase (557 aa).

A2 carries the N-acetylalanine modification. The residue at position 12 (K12) is an N6-acetyllysine. S107 is subject to Phosphoserine. The residue at position 142 (K142) is an N6-acetyllysine. 159 to 160 (GS) lines the D-glucose 6-phosphate pocket. The residue at position 185 (S185) is a Phosphoserine; by CK2. 210-215 (SKTFTT) contributes to the D-glucose 6-phosphate binding site. T250 is subject to Phosphothreonine. D-glucose 6-phosphate is bound by residues Q354, E358, and H389. E358 serves as the catalytic Proton donor. Residue H389 is part of the active site. Position 455 is a phosphoserine (S455). K519 contributes to the D-glucose 6-phosphate binding site. K519 is an active-site residue.

It belongs to the GPI family. In terms of assembly, homodimer; in the catalytically active form. Monomer in the secreted form. Phosphorylation at Ser-185 by CK2 has been shown to decrease enzymatic activity and may contribute to secretion by a non-classical secretory pathway. In terms of processing, ISGylated.

Its subcellular location is the cytoplasm. The protein resides in the secreted. It catalyses the reaction alpha-D-glucose 6-phosphate = beta-D-fructose 6-phosphate. Its pathway is carbohydrate degradation; glycolysis; D-glyceraldehyde 3-phosphate and glycerone phosphate from D-glucose: step 2/4. In the cytoplasm, catalyzes the conversion of glucose-6-phosphate to fructose-6-phosphate, the second step in glycolysis, and the reverse reaction during gluconeogenesis. Besides it's role as a glycolytic enzyme, also acts as a secreted cytokine: acts as an angiogenic factor (AMF) that stimulates endothelial cell motility. Acts as a neurotrophic factor, neuroleukin, for spinal and sensory neurons. It is secreted by lectin-stimulated T-cells and induces immunoglobulin secretion. The chain is Glucose-6-phosphate isomerase from Bos taurus (Bovine).